The primary structure comprises 71 residues: Large ribosomal subunit protein uL29 (71 aa).

Belongs to the universal ribosomal protein uL29 family. In terms of assembly, part of the 50S ribosomal subunit. Interacts with protein L23.

Stabilizes the tertiary rRNA structure within the 23S rRNA domain (domain I) to which it binds. Located at the polypeptide exit tunnel on the outside of the subunit. The chain is Large ribosomal subunit protein uL29 (rpl29) from Haloarcula marismortui (strain ATCC 43049 / DSM 3752 / JCM 8966 / VKM B-1809) (Halobacterium marismortui).